The chain runs to 295 residues: Protoheme IX farnesyltransferase (295 aa).

Transmembrane regions (helical) follow at residues 8 to 28 (VTKP…FLLA), 35 to 55 (YTLF…GCVF), 84 to 104 (VSLV…WFGA), 107 to 127 (LACW…SLYM), 132 to 152 (VYGT…GYCA), 162 to 182 (LILL…IAIF), 208 to 228 (ITLY…GGYA), 233 to 253 (LVVA…GYKV), and 264 to 284 (FVFS…DFMV).

The protein belongs to the UbiA prenyltransferase family. Protoheme IX farnesyltransferase subfamily.

It is found in the cell inner membrane. It carries out the reaction heme b + (2E,6E)-farnesyl diphosphate + H2O = Fe(II)-heme o + diphosphate. It participates in porphyrin-containing compound metabolism; heme O biosynthesis; heme O from protoheme: step 1/1. In terms of biological role, converts heme B (protoheme IX) to heme O by substitution of the vinyl group on carbon 2 of heme B porphyrin ring with a hydroxyethyl farnesyl side group. The protein is Protoheme IX farnesyltransferase of Enterobacter sp. (strain 638).